We begin with the raw amino-acid sequence, 289 residues long: NFIL3 like protein (289 aa).

The interval 1 to 27 (MDVGFSGLPDVSQSHSKTLWGARGRGP) is disordered. The bZIP domain occupies 42 to 105 (DTVYWEKRRK…GLLPLTGGPR (64 aa)). A basic motif region spans residues 48 to 64 (KRRKNNEAAKRSREKRR). The leucine-zipper stretch occupies residues 70 to 91 (IEGRLAALMEENALLKGELKAL).

The protein belongs to the bZIP family. NFIL3 subfamily.

It localises to the nucleus. This Homo sapiens (Human) protein is NFIL3 like protein.